The following is a 177-amino-acid chain: Adenine phosphoribosyltransferase (177 aa).

The protein belongs to the purine/pyrimidine phosphoribosyltransferase family. As to quaternary structure, homodimer.

The protein resides in the cytoplasm. The catalysed reaction is AMP + diphosphate = 5-phospho-alpha-D-ribose 1-diphosphate + adenine. Its pathway is purine metabolism; AMP biosynthesis via salvage pathway; AMP from adenine: step 1/1. In terms of biological role, catalyzes a salvage reaction resulting in the formation of AMP, that is energically less costly than de novo synthesis. In Mycobacteroides abscessus (strain ATCC 19977 / DSM 44196 / CCUG 20993 / CIP 104536 / JCM 13569 / NCTC 13031 / TMC 1543 / L948) (Mycobacterium abscessus), this protein is Adenine phosphoribosyltransferase.